We begin with the raw amino-acid sequence, 407 residues long: MKRAFIMVLDSFGIGEAKDAKSFGDEGADTLGHIARACARGEADIGRQGPLHLPNLSRLGLGKAALESTGRFPEGLDENAEVIGAYGYANELSSGKDTPSGHWEIAGVPVLFDWGYFHEHQNSFPQALLDTLVERANLPGYLGNCHSSGTVILDQLGEEHMKSGKPIFYTSADSVFQIACHEETFGLERLYELCEIARDELNKGGYNIGRVIARPFVGDKAGHFQRTGNRHDLAVEPPAPTMLKKLVDEKQGDVVSIGKIADIYANVGITKKVKATGIDALFDATLQEMRQAGNDTIVFTNFVDFDSSYGHRRDVAGYAAALELFDRRLPEMLALVKEDDILILTADHGCDPTWHGSDHTREHIPVLVYGPKVKPGSLGERDTFADIGQTVARYFGLSPMAYGKPMF.

Residues aspartate 10, aspartate 306, histidine 311, aspartate 347, histidine 348, and histidine 359 each coordinate Mn(2+).

This sequence belongs to the phosphopentomutase family. It depends on Mn(2+) as a cofactor.

It is found in the cytoplasm. It catalyses the reaction 2-deoxy-alpha-D-ribose 1-phosphate = 2-deoxy-D-ribose 5-phosphate. The catalysed reaction is alpha-D-ribose 1-phosphate = D-ribose 5-phosphate. The protein operates within carbohydrate degradation; 2-deoxy-D-ribose 1-phosphate degradation; D-glyceraldehyde 3-phosphate and acetaldehyde from 2-deoxy-alpha-D-ribose 1-phosphate: step 1/2. In terms of biological role, isomerase that catalyzes the conversion of deoxy-ribose 1-phosphate (dRib-1-P) and ribose 1-phosphate (Rib-1-P) to deoxy-ribose 5-phosphate (dRib-5-P) and ribose 5-phosphate (Rib-5-P), respectively. This Edwardsiella ictaluri (strain 93-146) protein is Phosphopentomutase.